The sequence spans 522 residues: Maturase K (522 aa).

The protein belongs to the intron maturase 2 family. MatK subfamily.

It localises to the plastid. Its subcellular location is the chloroplast. Its function is as follows. Usually encoded in the trnK tRNA gene intron. Probably assists in splicing its own and other chloroplast group II introns. This is Maturase K from Micranthus junceus (Micranthus plantagineus var. junceus).